Consider the following 196-residue polypeptide: Putative lipopolysaccharide biosynthesis O-acetyl transferase WbbJ (196 aa).

Belongs to the transferase hexapeptide repeat family.

It functions in the pathway bacterial outer membrane biogenesis; lipopolysaccharide biosynthesis. Functionally, putative O-acetyltransferase that transfers an O-acetyl group to the O antigen. This is Putative lipopolysaccharide biosynthesis O-acetyl transferase WbbJ (wbbJ) from Escherichia coli (strain K12).